Here is a 214-residue protein sequence, read N- to C-terminus: Octanoyltransferase (214 aa).

Residues 29–214 form the BPL/LPL catalytic domain; sequence SETLDEIWVL…QHLQKQLIPS (186 aa). Substrate-binding positions include 69–76, 146–148, and 159–161; these read RGGEITYH, ALG, and GLA. The active-site Acyl-thioester intermediate is Cys177.

This sequence belongs to the LipB family.

It is found in the cytoplasm. It carries out the reaction octanoyl-[ACP] + L-lysyl-[protein] = N(6)-octanoyl-L-lysyl-[protein] + holo-[ACP] + H(+). The protein operates within protein modification; protein lipoylation via endogenous pathway; protein N(6)-(lipoyl)lysine from octanoyl-[acyl-carrier-protein]: step 1/2. In terms of biological role, catalyzes the transfer of endogenously produced octanoic acid from octanoyl-acyl-carrier-protein onto the lipoyl domains of lipoate-dependent enzymes. Lipoyl-ACP can also act as a substrate although octanoyl-ACP is likely to be the physiological substrate. This chain is Octanoyltransferase, found in Polynucleobacter necessarius subsp. necessarius (strain STIR1).